The chain runs to 175 residues: Clathrin-associated protein AP-3 complex component APS3 (175 aa).

Belongs to the adaptor complexes small subunit family. As to quaternary structure, adaptor protein complex 3 (AP-3) is a heterotetramer composed of 2 large adaptins, a medium adaptin and a small adaptin.

The protein localises to the golgi apparatus. It is found in the cytoplasmic vesicle membrane. Functionally, part of the AP-3 complex, an adapter-related complex which is not clathrin-associated. The complex is associated with the Golgi region as well as more peripheral structures. It facilitates the budding of vesicles from the Golgi membrane. Involved in vacuolar trafficking and contributes to hyphal growth and pathogenesis. The protein is Clathrin-associated protein AP-3 complex component APS3 (APS3) of Candida albicans (strain SC5314 / ATCC MYA-2876) (Yeast).